Here is a 419-residue protein sequence, read N- to C-terminus: CinA-like protein (419 aa).

Belongs to the CinA family.

This chain is CinA-like protein, found in Synechococcus sp. (strain CC9902).